We begin with the raw amino-acid sequence, 525 residues long: GMP synthase [glutamine-hydrolyzing] (525 aa).

One can recognise a Glutamine amidotransferase type-1 domain in the interval 8–207; it reads KILILDFGSQ…AVAICGCGTN (200 aa). Catalysis depends on cysteine 85, which acts as the Nucleophile. Residues histidine 181 and glutamate 183 contribute to the active site. One can recognise a GMPS ATP-PPase domain in the interval 208–400; the sequence is WKPSSIIEDA…LGLPYNMLYR (193 aa). 235 to 241 contacts ATP; that stretch reads SGGVDSS.

In terms of assembly, homodimer.

The enzyme catalyses XMP + L-glutamine + ATP + H2O = GMP + L-glutamate + AMP + diphosphate + 2 H(+). It functions in the pathway purine metabolism; GMP biosynthesis; GMP from XMP (L-Gln route): step 1/1. Its function is as follows. Catalyzes the synthesis of GMP from XMP. In Shewanella denitrificans (strain OS217 / ATCC BAA-1090 / DSM 15013), this protein is GMP synthase [glutamine-hydrolyzing].